Here is an 88-residue protein sequence, read N- to C-terminus: Protein MATERNALLY EXPRESSED GENE 2 (88 aa).

A signal peptide spans 1-27 (MEYRKRVDALVFFSLLLLGYFAAHAHG). Cysteines 65 and 87 form a disulfide.

This sequence belongs to the MEG family. In terms of tissue distribution, expressed exclusively in endosperm.

This Zea mays (Maize) protein is Protein MATERNALLY EXPRESSED GENE 2 (MEG2).